The following is a 374-amino-acid chain: Putative L-lysine 2,3-aminomutase aq_1632 (374 aa).

Residues 86-314 (HKYPDTALLL…ARVRYVMSHE (229 aa)) enclose the Radical SAM core domain. Positions 100, 104, and 107 each coordinate [4Fe-4S] cluster. N6-(pyridoxal phosphate)lysine is present on Lys-317.

This sequence belongs to the radical SAM superfamily. KamA family. [4Fe-4S] cluster serves as cofactor. The cofactor is pyridoxal 5'-phosphate.

This Aquifex aeolicus (strain VF5) protein is Putative L-lysine 2,3-aminomutase aq_1632.